A 297-amino-acid polypeptide reads, in one-letter code: 4-hydroxybenzoate octaprenyltransferase (297 aa).

9 helical membrane-spanning segments follow: residues 29-49 (IGTY…AEGV), 55-75 (LFIF…VNDF), 102-122 (AWTL…LTNA), 124-141 (TVYL…YPFM), 146-166 (FYPQ…AFTA), 169-189 (GSLP…TVAY), 219-239 (VIIV…GVRF), 241-261 (LGQW…WEFW), and 270-290 (VCFK…AGIV).

It belongs to the UbiA prenyltransferase family. Requires Mg(2+) as cofactor.

The protein localises to the cell inner membrane. It catalyses the reaction all-trans-octaprenyl diphosphate + 4-hydroxybenzoate = 4-hydroxy-3-(all-trans-octaprenyl)benzoate + diphosphate. It functions in the pathway cofactor biosynthesis; ubiquinone biosynthesis. Its function is as follows. Catalyzes the prenylation of para-hydroxybenzoate (PHB) with an all-trans polyprenyl group. Mediates the second step in the final reaction sequence of ubiquinone-8 (UQ-8) biosynthesis, which is the condensation of the polyisoprenoid side chain with PHB, generating the first membrane-bound Q intermediate 3-octaprenyl-4-hydroxybenzoate. The chain is 4-hydroxybenzoate octaprenyltransferase from Stutzerimonas stutzeri (strain A1501) (Pseudomonas stutzeri).